Consider the following 240-residue polypeptide: UDP-2,3-diacylglucosamine hydrolase (240 aa).

Residues Asp8, His10, Asp41, Asn79, and His114 each coordinate Mn(2+). Position 79-80 (79-80 (NR)) interacts with substrate. Asp122, Ser160, Asn164, Lys167, and His195 together coordinate substrate. 2 residues coordinate Mn(2+): His195 and His197.

The protein belongs to the LpxH family. Mn(2+) serves as cofactor.

Its subcellular location is the cell inner membrane. The enzyme catalyses UDP-2-N,3-O-bis[(3R)-3-hydroxytetradecanoyl]-alpha-D-glucosamine + H2O = 2-N,3-O-bis[(3R)-3-hydroxytetradecanoyl]-alpha-D-glucosaminyl 1-phosphate + UMP + 2 H(+). The protein operates within glycolipid biosynthesis; lipid IV(A) biosynthesis; lipid IV(A) from (3R)-3-hydroxytetradecanoyl-[acyl-carrier-protein] and UDP-N-acetyl-alpha-D-glucosamine: step 4/6. In terms of biological role, hydrolyzes the pyrophosphate bond of UDP-2,3-diacylglucosamine to yield 2,3-diacylglucosamine 1-phosphate (lipid X) and UMP by catalyzing the attack of water at the alpha-P atom. Involved in the biosynthesis of lipid A, a phosphorylated glycolipid that anchors the lipopolysaccharide to the outer membrane of the cell. This is UDP-2,3-diacylglucosamine hydrolase from Yersinia pseudotuberculosis serotype O:1b (strain IP 31758).